A 300-amino-acid polypeptide reads, in one-letter code: UDP-3-O-acyl-N-acetylglucosamine deacetylase (300 aa).

Histidine 76, histidine 235, and aspartate 239 together coordinate Zn(2+). Histidine 262 functions as the Proton donor in the catalytic mechanism.

Belongs to the LpxC family. Zn(2+) serves as cofactor.

It catalyses the reaction a UDP-3-O-[(3R)-3-hydroxyacyl]-N-acetyl-alpha-D-glucosamine + H2O = a UDP-3-O-[(3R)-3-hydroxyacyl]-alpha-D-glucosamine + acetate. Its pathway is glycolipid biosynthesis; lipid IV(A) biosynthesis; lipid IV(A) from (3R)-3-hydroxytetradecanoyl-[acyl-carrier-protein] and UDP-N-acetyl-alpha-D-glucosamine: step 2/6. In terms of biological role, catalyzes the hydrolysis of UDP-3-O-myristoyl-N-acetylglucosamine to form UDP-3-O-myristoylglucosamine and acetate, the committed step in lipid A biosynthesis. This Halorhodospira halophila (strain DSM 244 / SL1) (Ectothiorhodospira halophila (strain DSM 244 / SL1)) protein is UDP-3-O-acyl-N-acetylglucosamine deacetylase.